The sequence spans 144 residues: Ribonuclease P protein subunit RPR2 (144 aa).

Residues 1–22 (MGKKAHGGKMKPEIDENGTLLV) are disordered. Cys90, Cys93, Cys115, and Cys117 together coordinate Zn(2+).

Belongs to the eukaryotic/archaeal RNase P protein component 4 family. As to quaternary structure, component of nuclear RNase P. RNase P consists of an RNA moiety and at least 9 protein subunits including POP1, POP3, POP4, POP5, POP6, POP7, POP8, RPP1 and RPR2, many of which are shared with the RNase MPR complex. Requires Zn(2+) as cofactor.

It is found in the nucleus. It carries out the reaction Endonucleolytic cleavage of RNA, removing 5'-extranucleotides from tRNA precursor.. In terms of biological role, component of ribonuclease P, a protein complex that generates mature tRNA molecules by cleaving their 5'-ends. The sequence is that of Ribonuclease P protein subunit RPR2 (RPR2) from Saccharomyces cerevisiae (strain ATCC 204508 / S288c) (Baker's yeast).